The chain runs to 281 residues: 2-dehydro-3-deoxyphosphooctonate aldolase (281 aa).

This sequence belongs to the KdsA family.

It localises to the cytoplasm. The enzyme catalyses D-arabinose 5-phosphate + phosphoenolpyruvate + H2O = 3-deoxy-alpha-D-manno-2-octulosonate-8-phosphate + phosphate. It participates in carbohydrate biosynthesis; 3-deoxy-D-manno-octulosonate biosynthesis; 3-deoxy-D-manno-octulosonate from D-ribulose 5-phosphate: step 2/3. It functions in the pathway bacterial outer membrane biogenesis; lipopolysaccharide biosynthesis. The chain is 2-dehydro-3-deoxyphosphooctonate aldolase from Azotobacter vinelandii (strain DJ / ATCC BAA-1303).